Here is a 543-residue protein sequence, read N- to C-terminus: MAALDLCALPQAEVTFEDVAVFLSQEEWGLLGPAQKGLYREVMLETYRNLVSLGAGLAGPKPEVIAQLEQGDELWVLDMHGAEQPSVDGSAHGTRTENQEVTSGEMLFGRELDPLRGSVLRGPEPGEVHERVREPEGRLDRPGEQRGPRLVTLANEECGLESGGNLRSRSRPVPDQRPHKCDICEQSFEQRSYLNNHKRVHRCKKTNIVHDSGEIFAANLVKEDQKIPVGKRLYYCGCCGKAFRYSANLVKHQRLHSEEKPYKCEECGKAFHQSCELISHRRMHSGEIPYRCDECGKTFNQRPNLMKHQRIHTGEKPYKCSECGKHFSAYSSLIYHQRIHTGEKPYKCSDCGKAFSDGSILIRHRRTHTGEKPYECKECGKGFTQSSNLIQHQRIHTGEKPYKCNECEKAFIQKTKLVEHQRSHTGEKPYECNDCGKVFSQSTHLIQHQRIHTGEKPYKCSECGKAFHNSSRLIHHQRSHHGEKPYKCADCKKAFSQGTYLLQHRRIHTGEKPYTCGECGKAFRHSSNMSQHQRIHLREDFSL.

The 74-residue stretch at 14–87 (VTFEDVAVFL…DMHGAEQPSV (74 aa)) folds into the KRAB domain. The segment at 84–151 (QPSVDGSAHG…PGEQRGPRLV (68 aa)) is disordered. Over residues 124 to 147 (EPGEVHERVREPEGRLDRPGEQRG) the composition is skewed to basic and acidic residues. C2H2-type zinc fingers lie at residues 179–201 (HKCD…KRVH), 234–256 (YYCG…QRLH), 262–284 (YKCE…RRMH), 290–312 (YRCD…QRIH), 318–340 (YKCS…QRIH), 346–368 (YKCS…RRTH), 374–396 (YECK…QRIH), 402–424 (YKCN…QRSH), 430–452 (YECN…QRIH), 458–480 (YKCS…QRSH), 486–508 (YKCA…RRIH), and 514–536 (YTCG…QRIH).

This sequence belongs to the krueppel C2H2-type zinc-finger protein family.

It localises to the nucleus. In terms of biological role, may be involved in transcriptional regulation. The chain is Zinc finger protein 34 (ZNF34) from Bos taurus (Bovine).